Consider the following 176-residue polypeptide: ATP-dependent protease subunit HslV (176 aa).

Residue Thr2 is part of the active site. Na(+)-binding residues include Gly157, Cys160, and Thr163.

This sequence belongs to the peptidase T1B family. HslV subfamily. In terms of assembly, a double ring-shaped homohexamer of HslV is capped on each side by a ring-shaped HslU homohexamer. The assembly of the HslU/HslV complex is dependent on binding of ATP.

The protein localises to the cytoplasm. The catalysed reaction is ATP-dependent cleavage of peptide bonds with broad specificity.. Its activity is regulated as follows. Allosterically activated by HslU binding. Functionally, protease subunit of a proteasome-like degradation complex believed to be a general protein degrading machinery. This chain is ATP-dependent protease subunit HslV, found in Ectopseudomonas mendocina (strain ymp) (Pseudomonas mendocina).